A 153-amino-acid polypeptide reads, in one-letter code: Large ribosomal subunit protein bL9 (153 aa).

It belongs to the bacterial ribosomal protein bL9 family.

Functionally, binds to the 23S rRNA. The protein is Large ribosomal subunit protein bL9 of Mycoplasma mycoides subsp. mycoides SC (strain CCUG 32753 / NCTC 10114 / PG1).